Reading from the N-terminus, the 505-residue chain is Flagellin (505 aa).

It belongs to the bacterial flagellin family.

The protein resides in the secreted. The protein localises to the bacterial flagellum. In terms of biological role, flagellin is the subunit protein which polymerizes to form the filaments of bacterial flagella. The chain is Flagellin (fliC) from Salmonella derby.